A 487-amino-acid polypeptide reads, in one-letter code: Glutamyl-tRNA(Gln) amidotransferase subunit A (487 aa).

Catalysis depends on charge relay system residues lysine 74 and serine 149. Residue serine 173 is the Acyl-ester intermediate of the active site.

Belongs to the amidase family. GatA subfamily. In terms of assembly, heterotrimer of A, B and C subunits.

The enzyme catalyses L-glutamyl-tRNA(Gln) + L-glutamine + ATP + H2O = L-glutaminyl-tRNA(Gln) + L-glutamate + ADP + phosphate + H(+). Functionally, allows the formation of correctly charged Gln-tRNA(Gln) through the transamidation of misacylated Glu-tRNA(Gln) in organisms which lack glutaminyl-tRNA synthetase. The reaction takes place in the presence of glutamine and ATP through an activated gamma-phospho-Glu-tRNA(Gln). This is Glutamyl-tRNA(Gln) amidotransferase subunit A from Prochlorococcus marinus (strain MIT 9211).